The chain runs to 143 residues: Large ribosomal subunit protein uL11 (143 aa).

The protein belongs to the universal ribosomal protein uL11 family. Part of the ribosomal stalk of the 50S ribosomal subunit. Interacts with L10 and the large rRNA to form the base of the stalk. L10 forms an elongated spine to which L12 dimers bind in a sequential fashion forming a multimeric L10(L12)X complex. One or more lysine residues are methylated.

Functionally, forms part of the ribosomal stalk which helps the ribosome interact with GTP-bound translation factors. In Paenarthrobacter aurescens (strain TC1), this protein is Large ribosomal subunit protein uL11.